The chain runs to 1168 residues: Transcription-repair-coupling factor (1168 aa).

Positions Asp-633 to Ile-794 constitute a Helicase ATP-binding domain. Residue Gly-646–Thr-653 coordinates ATP. The short motif at Asp-747–Gln-750 is the DEEQ box element. Positions Val-808–Asn-969 constitute a Helicase C-terminal domain.

It in the N-terminal section; belongs to the UvrB family. In the C-terminal section; belongs to the helicase family. RecG subfamily.

It localises to the cytoplasm. Couples transcription and DNA repair by recognizing RNA polymerase (RNAP) stalled at DNA lesions. Mediates ATP-dependent release of RNAP and its truncated transcript from the DNA, and recruitment of nucleotide excision repair machinery to the damaged site. The chain is Transcription-repair-coupling factor from Staphylococcus aureus (strain MSSA476).